The sequence spans 48 residues: uncharacterized protein (48 aa).

The N-terminal stretch at 1–21 (MLENNVFRLMILMGGVIALIA) is a signal peptide.

This is an uncharacterized protein from Bacillus anthracis.